Consider the following 505-residue polypeptide: 2,3-bisphosphoglycerate-independent phosphoglycerate mutase (505 aa).

Mn(2+) contacts are provided by aspartate 13 and serine 63. Serine 63 (phosphoserine intermediate) is an active-site residue. Substrate contacts are provided by residues histidine 124, 153 to 154 (RD), arginine 183, arginine 189, 254 to 257 (RADR), and lysine 330. Mn(2+)-binding residues include aspartate 396, histidine 400, aspartate 437, histidine 438, and histidine 456.

Belongs to the BPG-independent phosphoglycerate mutase family. In terms of assembly, monomer. Mn(2+) is required as a cofactor.

It catalyses the reaction (2R)-2-phosphoglycerate = (2R)-3-phosphoglycerate. Its pathway is carbohydrate degradation; glycolysis; pyruvate from D-glyceraldehyde 3-phosphate: step 3/5. Its function is as follows. Catalyzes the interconversion of 2-phosphoglycerate and 3-phosphoglycerate. The polypeptide is 2,3-bisphosphoglycerate-independent phosphoglycerate mutase (Ruegeria pomeroyi (strain ATCC 700808 / DSM 15171 / DSS-3) (Silicibacter pomeroyi)).